The chain runs to 269 residues: Shikimate dehydrogenase (NADP(+)) (269 aa).

Residues 17-19 (SKS) and T64 each bind shikimate. The active-site Proton acceptor is the K68. Residue E80 coordinates NADP(+). The shikimate site is built by N89 and D105. Residues 130-134 (GAGGA), 154-159 (NRTHAK), and M213 each bind NADP(+). Y215 lines the shikimate pocket. Residue G237 coordinates NADP(+).

This sequence belongs to the shikimate dehydrogenase family. Homodimer.

It catalyses the reaction shikimate + NADP(+) = 3-dehydroshikimate + NADPH + H(+). The protein operates within metabolic intermediate biosynthesis; chorismate biosynthesis; chorismate from D-erythrose 4-phosphate and phosphoenolpyruvate: step 4/7. Involved in the biosynthesis of the chorismate, which leads to the biosynthesis of aromatic amino acids. Catalyzes the reversible NADPH linked reduction of 3-dehydroshikimate (DHSA) to yield shikimate (SA). This is Shikimate dehydrogenase (NADP(+)) from Neisseria cinerea.